The sequence spans 308 residues: Ribonuclease HIII (308 aa).

An RNase H type-2 domain is found at 93-308 (MSVLGSDETG…ANTEKARKMI (216 aa)). A divalent metal cation-binding residues include aspartate 99, glutamate 100, and aspartate 204.

Belongs to the RNase HII family. RnhC subfamily. It depends on Mn(2+) as a cofactor. Mg(2+) is required as a cofactor.

Its subcellular location is the cytoplasm. It carries out the reaction Endonucleolytic cleavage to 5'-phosphomonoester.. Its function is as follows. Endonuclease that specifically degrades the RNA of RNA-DNA hybrids. This Lysinibacillus sphaericus (strain C3-41) protein is Ribonuclease HIII.